Here is a 147-residue protein sequence, read N- to C-terminus: MTSSDVIPASTTSSSGWIASVGSAAGWVWDGMKVTGSVFNDYGTSTTRNTVCTTATVAGGFLGGWSGGAIGSAVGTLILPGIGTAVGSFLGGASAALVAGKATIVVTDRVLDTISYDIETVSCEKCGRGFRCKLYKEGRDKLCYRCK.

This is an uncharacterized protein from Caenorhabditis elegans.